A 681-amino-acid polypeptide reads, in one-letter code: DNA ligase (681 aa).

NAD(+) is bound by residues 45–49 (DFDFD), 94–95 (SL), and Glu120. Lys122 serves as the catalytic N6-AMP-lysine intermediate. Residues Arg143, Glu177, Lys289, and Lys313 each coordinate NAD(+). Residues Cys403, Cys406, Cys421, and Cys426 each contribute to the Zn(2+) site. Residues 593-681 (ADQQPFAGQS…SLKIDFKNLI (89 aa)) form the BRCT domain.

The protein belongs to the NAD-dependent DNA ligase family. LigA subfamily. It depends on Mg(2+) as a cofactor. Mn(2+) is required as a cofactor.

It catalyses the reaction NAD(+) + (deoxyribonucleotide)n-3'-hydroxyl + 5'-phospho-(deoxyribonucleotide)m = (deoxyribonucleotide)n+m + AMP + beta-nicotinamide D-nucleotide.. DNA ligase that catalyzes the formation of phosphodiester linkages between 5'-phosphoryl and 3'-hydroxyl groups in double-stranded DNA using NAD as a coenzyme and as the energy source for the reaction. It is essential for DNA replication and repair of damaged DNA. The chain is DNA ligase from Leptospira interrogans serogroup Icterohaemorrhagiae serovar copenhageni (strain Fiocruz L1-130).